The following is a 732-amino-acid chain: uncharacterized protein (732 aa).

Positions 145–207 are disordered; that stretch reads ETLRDSVINP…RRRPEMASPH (63 aa). A compositionally biased stretch (basic and acidic residues) spans 170 to 179; that stretch reads KGHETLERGS. A Reverse transcriptase domain is found at 176-524; sequence ERGSKALGPE…KKIPFLGYLI (349 aa).

It is found in the mitochondrion. This is an uncharacterized protein from Marchantia polymorpha (Common liverwort).